The following is a 183-amino-acid chain: UPF0397 protein EAT1b_2102 (183 aa).

Helical transmembrane passes span 9-29, 42-62, 74-94, 117-137, and 147-167; these read IVATGIGAAVFIILSRFAAIP, AFLAFMAVLFGPITAGLIGLI, SPWWSWVIVSGFVGLGIGLIA, AVVQAIGWIVIAPVLDILIYA, and GAVAATSNILTVGVIGTLLLV.

Belongs to the UPF0397 family.

The protein localises to the cell membrane. The protein is UPF0397 protein EAT1b_2102 of Exiguobacterium sp. (strain ATCC BAA-1283 / AT1b).